A 320-amino-acid chain; its full sequence is Putative polysaccharide deacetylase (320 aa).

Positions 69–303 (RSIESCFEYG…ITSKEGVWVA (235 aa)) constitute a NodB homology domain.

Belongs to the polysaccharide deacetylase family. As to quaternary structure, homodimer.

Its subcellular location is the prospore. Its function is as follows. May deacetylate chitin. Required for spore formation. The chain is Putative polysaccharide deacetylase from Schizosaccharomyces pombe (strain 972 / ATCC 24843) (Fission yeast).